We begin with the raw amino-acid sequence, 246 residues long: 1-(5-phosphoribosyl)-5-[(5-phosphoribosylamino)methylideneamino] imidazole-4-carboxamide isomerase (246 aa).

The active-site Proton acceptor is D10. D135 (proton donor) is an active-site residue.

This sequence belongs to the HisA/HisF family.

It is found in the cytoplasm. The catalysed reaction is 1-(5-phospho-beta-D-ribosyl)-5-[(5-phospho-beta-D-ribosylamino)methylideneamino]imidazole-4-carboxamide = 5-[(5-phospho-1-deoxy-D-ribulos-1-ylimino)methylamino]-1-(5-phospho-beta-D-ribosyl)imidazole-4-carboxamide. Its pathway is amino-acid biosynthesis; L-histidine biosynthesis; L-histidine from 5-phospho-alpha-D-ribose 1-diphosphate: step 4/9. The polypeptide is 1-(5-phosphoribosyl)-5-[(5-phosphoribosylamino)methylideneamino] imidazole-4-carboxamide isomerase (Methanosarcina mazei (strain ATCC BAA-159 / DSM 3647 / Goe1 / Go1 / JCM 11833 / OCM 88) (Methanosarcina frisia)).